Here is a 364-residue protein sequence, read N- to C-terminus: Paraneoplastic antigen Ma2 homolog (364 aa).

Ala-2 is subject to N-acetylalanine. Over residues 335–353 (EEEEASFENESIEEPEEGD) the composition is skewed to acidic residues. The segment at 335–364 (EEEEASFENESIEEPEEGDGYGGWNHEGDD) is disordered. Residues 354 to 364 (GYGGWNHEGDD) show a composition bias toward gly residues.

It belongs to the PNMA family.

The protein resides in the nucleus. It localises to the nucleolus. In Macaca fascicularis (Crab-eating macaque), this protein is Paraneoplastic antigen Ma2 homolog (PNMA2).